The sequence spans 204 residues: MSLKKNQLRAILNSSLGKLADHIIDSQSISICKQVVELPEWKRCKNVCLYMNMPKKEVRTRCLIDVAFKEGKNVFIPKCIGSHVMEMYQVFEKTESLTINKWGIAEPNGESRKIMDDETDCELIIVPGVAFDEKLSRLGHGKGYYDNYISKYQSWALQKESRANMFKVGICLKEQILPNREIPMDTRDQKLDALVTPEKVIRNI.

5-9 (KNQLR) serves as a coordination point for ATP. Substrate contacts are provided by residues glutamate 57, tryptophan 102, and 140–144 (HGKGY). ATP contacts are provided by residues 139–146 (GHGKGYYD) and aspartate 188.

The protein belongs to the 5-formyltetrahydrofolate cyclo-ligase family.

It catalyses the reaction (6S)-5-formyl-5,6,7,8-tetrahydrofolate + ATP = (6R)-5,10-methenyltetrahydrofolate + ADP + phosphate. In Schizosaccharomyces pombe (strain 972 / ATCC 24843) (Fission yeast), this protein is Probable 5-formyltetrahydrofolate cyclo-ligase.